Reading from the N-terminus, the 491-residue chain is Glutamyl-tRNA(Gln) amidotransferase subunit A (491 aa).

Residues K77 and S152 each act as charge relay system in the active site. S176 (acyl-ester intermediate) is an active-site residue.

This sequence belongs to the amidase family. GatA subfamily. Heterotrimer of A, B and C subunits.

It catalyses the reaction L-glutamyl-tRNA(Gln) + L-glutamine + ATP + H2O = L-glutaminyl-tRNA(Gln) + L-glutamate + ADP + phosphate + H(+). Functionally, allows the formation of correctly charged Gln-tRNA(Gln) through the transamidation of misacylated Glu-tRNA(Gln) in organisms which lack glutaminyl-tRNA synthetase. The reaction takes place in the presence of glutamine and ATP through an activated gamma-phospho-Glu-tRNA(Gln). The sequence is that of Glutamyl-tRNA(Gln) amidotransferase subunit A from Chlamydia trachomatis serovar A (strain ATCC VR-571B / DSM 19440 / HAR-13).